The primary structure comprises 245 residues: Pyridoxine 5'-phosphate synthase (245 aa).

Asn-7 contributes to the 3-amino-2-oxopropyl phosphate binding site. 9–10 (DH) is a 1-deoxy-D-xylulose 5-phosphate binding site. 3-amino-2-oxopropyl phosphate is bound at residue Arg-18. The active-site Proton acceptor is His-43. Arg-45 and His-50 together coordinate 1-deoxy-D-xylulose 5-phosphate. Glu-70 (proton acceptor) is an active-site residue. Thr-100 contacts 1-deoxy-D-xylulose 5-phosphate. His-190 functions as the Proton donor in the catalytic mechanism. 3-amino-2-oxopropyl phosphate contacts are provided by residues Gly-191 and 212–213 (GH).

The protein belongs to the PNP synthase family. Homooctamer; tetramer of dimers.

It localises to the cytoplasm. It carries out the reaction 3-amino-2-oxopropyl phosphate + 1-deoxy-D-xylulose 5-phosphate = pyridoxine 5'-phosphate + phosphate + 2 H2O + H(+). Its pathway is cofactor biosynthesis; pyridoxine 5'-phosphate biosynthesis; pyridoxine 5'-phosphate from D-erythrose 4-phosphate: step 5/5. Functionally, catalyzes the complicated ring closure reaction between the two acyclic compounds 1-deoxy-D-xylulose-5-phosphate (DXP) and 3-amino-2-oxopropyl phosphate (1-amino-acetone-3-phosphate or AAP) to form pyridoxine 5'-phosphate (PNP) and inorganic phosphate. The protein is Pyridoxine 5'-phosphate synthase of Prochlorococcus marinus (strain NATL1A).